A 429-amino-acid polypeptide reads, in one-letter code: Protein cereblon (429 aa).

A disordered region spans residues 1 to 30 (MGNHLPLLPAESEEEDEMEVEDQDSKEAKK). Residues 11 to 22 (ESEEEDEMEVED) show a composition bias toward acidic residues. Ser12 carries the phosphoserine modification. Residues 68-306 (IPVLPQVMMI…CELDIMNKCT (239 aa)) enclose the Lon N-terminal domain. The region spanning 305-413 (CTSLCCKQCQ…LTRSALLPTI (109 aa)) is the CULT domain. Positions 310 and 313 each coordinate Zn(2+). Positions 365, 367, and 373 each coordinate (S)-thalidomide. Zn(2+) is bound by residues Cys378 and Cys381.

This sequence belongs to the CRBN family. Component of a DCX (DDB1-CUL4-X-box) protein ligase complex, at least composed of CRBN, CUL4A, DDB1 and RBX1. Interacts directly with DDB1. Interacts with KCNT1. Interacts with ILF2. Interacts with TRAF6 and ECSIT. Ubiquitinated, ubiquitination is mediated by its own DCX protein ligase complex.

It localises to the cytoplasm. The protein resides in the nucleus. Its subcellular location is the membrane. Its pathway is protein modification; protein ubiquitination. Its function is as follows. Substrate recognition component of a DCX (DDB1-CUL4-X-box) E3 protein ligase complex that mediates the ubiquitination and subsequent proteasomal degradation of target proteins, such as MEIS2, ILF2 or GLUL. Normal degradation of key regulatory proteins is required for normal limb outgrowth and expression of the fibroblast growth factor FGF8. Maintains presynaptic glutamate release and consequently cognitive functions, such as memory and learning, by negatively regulating large-conductance calcium-activated potassium (BK) channels in excitatory neurons. Likely to function by regulating the assembly and neuronal surface expression of BK channels via its interaction with KCNT1. May also be involved in regulating anxiety-like behaviors via a BK channel-independent mechanism. Plays a negative role in TLR4 signaling by interacting with TRAF6 and ECSIT, leading to inhibition of ECSIT ubiquitination, an important step of the signaling. The polypeptide is Protein cereblon (CRBN) (Pongo abelii (Sumatran orangutan)).